The sequence spans 694 residues: Inactive protein-arginine deiminase type-6 (694 aa).

2 positions are modified to phosphoserine: Ser-10 and Ser-446.

It belongs to the protein arginine deiminase family. Homodimers. Associates with alpha-tubulin. In terms of processing, phosphorylation at Ser-10, possibly by RSK-type kinases, and Ser-446 creates binding sites for 14-3-3 proteins. Highly expressed in oocytes and weakly expressed in other somatic tissues.

The protein resides in the cytoplasm. Its subcellular location is the cytoplasmic vesicle. It localises to the secretory vesicle. It is found in the cortical granule. The protein localises to the nucleus. Structural constituent of cytoplasmic lattices, which plays a key role in early embryonic development. Cytoplasmic lattices consist in fibrous structures found in the cytoplasm of oocytes and preimplantation embryos. They are required to store maternal proteins critical for embryonic development, such as ribosomal proteins and proteins that control epigenetic reprogramming of the preimplantation embryo, and prevent their degradation or activation. In contrast to other members of the family, does not show protein-arginine deiminase activity due to its inability to bind Ca(2+). In Homo sapiens (Human), this protein is Inactive protein-arginine deiminase type-6.